The sequence spans 256 residues: MDKLVLGGHEFNSRLLVGTGKYGSNNILPEVIKESGSEIITMALRRVDLDNKQENILTYIPKEMTILPNTSGATNAEEAVRIARISRKMGCGDFIKIEVISDTRYLLPDNEETIKATKILADEGFIVLPYMTPDLYAGRRLIEANAAAVMPLGAPIGSNRGLQMKEMIRIMIDELDIPIIVDAGIGKPSQAMEAMEMGADAVLVNTAIASAGDPVQMARAFKLAVEGGREAYIAKTGNVSEFANASSPLTGFLGNL.

Catalysis depends on lysine 96, which acts as the Schiff-base intermediate with DXP. 1-deoxy-D-xylulose 5-phosphate contacts are provided by residues glycine 157, 183 to 184 (AG), and 205 to 206 (NT).

The protein belongs to the ThiG family. In terms of assembly, homotetramer. Forms heterodimers with either ThiH or ThiS.

Its subcellular location is the cytoplasm. The enzyme catalyses [ThiS sulfur-carrier protein]-C-terminal-Gly-aminoethanethioate + 2-iminoacetate + 1-deoxy-D-xylulose 5-phosphate = [ThiS sulfur-carrier protein]-C-terminal Gly-Gly + 2-[(2R,5Z)-2-carboxy-4-methylthiazol-5(2H)-ylidene]ethyl phosphate + 2 H2O + H(+). Its pathway is cofactor biosynthesis; thiamine diphosphate biosynthesis. In terms of biological role, catalyzes the rearrangement of 1-deoxy-D-xylulose 5-phosphate (DXP) to produce the thiazole phosphate moiety of thiamine. Sulfur is provided by the thiocarboxylate moiety of the carrier protein ThiS. In vitro, sulfur can be provided by H(2)S. This chain is Thiazole synthase, found in Clostridioides difficile (strain 630) (Peptoclostridium difficile).